Here is a 609-residue protein sequence, read N- to C-terminus: Dihydroxy-acid dehydratase (609 aa).

A Mg(2+)-binding site is contributed by Asp-81. [2Fe-2S] cluster is bound at residue Cys-122. Residues Asp-123 and Lys-124 each contribute to the Mg(2+) site. The residue at position 124 (Lys-124) is an N6-carboxylysine. Cys-195 is a binding site for [2Fe-2S] cluster. Glu-491 serves as a coordination point for Mg(2+). The active-site Proton acceptor is the Ser-517.

The protein belongs to the IlvD/Edd family. In terms of assembly, homodimer. It depends on [2Fe-2S] cluster as a cofactor. The cofactor is Mg(2+).

It catalyses the reaction (2R)-2,3-dihydroxy-3-methylbutanoate = 3-methyl-2-oxobutanoate + H2O. The enzyme catalyses (2R,3R)-2,3-dihydroxy-3-methylpentanoate = (S)-3-methyl-2-oxopentanoate + H2O. It functions in the pathway amino-acid biosynthesis; L-isoleucine biosynthesis; L-isoleucine from 2-oxobutanoate: step 3/4. The protein operates within amino-acid biosynthesis; L-valine biosynthesis; L-valine from pyruvate: step 3/4. In terms of biological role, functions in the biosynthesis of branched-chain amino acids. Catalyzes the dehydration of (2R,3R)-2,3-dihydroxy-3-methylpentanoate (2,3-dihydroxy-3-methylvalerate) into 2-oxo-3-methylpentanoate (2-oxo-3-methylvalerate) and of (2R)-2,3-dihydroxy-3-methylbutanoate (2,3-dihydroxyisovalerate) into 2-oxo-3-methylbutanoate (2-oxoisovalerate), the penultimate precursor to L-isoleucine and L-valine, respectively. The chain is Dihydroxy-acid dehydratase from Acinetobacter baumannii (strain AB307-0294).